We begin with the raw amino-acid sequence, 400 residues long: Putative cytochrome P450 133B2 (400 aa).

Position 348 (Cys-348) interacts with heme.

The protein belongs to the cytochrome P450 family. It depends on heme as a cofactor.

The sequence is that of Putative cytochrome P450 133B2 (cyp133B2) from Xylella fastidiosa (strain 9a5c).